The chain runs to 514 residues: MKAKLLVSTAFLAASVSLSAQKSATITVHADQGKEIIPKEIYGQFAEHLGSCIYGGLWVGENSDIPNIKGYRTDVFNALKDLSVPVLRWPGGCFADEYHWMDGIGPKENRPKMVNNNWGGTIEDNSFGTHEFLNLCEMLGCEPYVSGNVGSGTVEELAKWVEYMTSDGDSPMANLRRKNGRDKAWKLKYLGVGNESWGCGGSMRPEYYADLYRRYSTYCRNYDGNRLFKIASGASDYDYKWTDVLMNRVGHRMDGLSLHYYTVTGWSGSKGSATQFNKDDYYWTMGKCLEVEDVLKKHCTIMDKYDKDKKIALLLDEWGTWWDEEPGTIKGHLYQQNTLRDAFVASLSLDVFHKYTDRLKMANIAQIVNVLQSMILTKDKEMVLTPTYYVFKMYKVHQDATYLPIDLTCEKMSVRDNRTVPMVSATASKNKDGVIHISLSNVDADEAQEITINLGDTKAKKAIGEILTASKLTDYNSFEKPNIVKPAPFKEVKINKGTMKVKLPAKSIVTLELQ.

Alpha-L-arabinofuranose contacts are provided by Glu-47 and Asn-194. The Proton donor/acceptor role is filled by Glu-195. Residues Tyr-261, Glu-317, and Gln-366 each contribute to the alpha-L-arabinofuranose site. The active-site Nucleophile is the Glu-317.

The protein belongs to the glycosyl hydrolase 51 family. In terms of assembly, homohexamer; trimer of dimers.

The protein resides in the cytoplasm. It catalyses the reaction Hydrolysis of terminal non-reducing alpha-L-arabinofuranoside residues in alpha-L-arabinosides.. It functions in the pathway glycan metabolism; L-arabinan degradation. In terms of biological role, involved in the degradation of arabinan and is a key enzyme in the complete degradation of the plant cell wall. Catalyzes the cleavage of terminal alpha-L-arabinofuranosyl residues in different hemicellulosic homopolysaccharides (branched and debranched arabinans) and heteropolysaccharides (arabinoxylans). This chain is Intracellular exo-alpha-L-arabinofuranosidase (asdII), found in Bacteroides ovatus.